Consider the following 303-residue polypeptide: Glycine--tRNA ligase alpha subunit (303 aa).

Belongs to the class-II aminoacyl-tRNA synthetase family. In terms of assembly, tetramer of two alpha and two beta subunits.

It is found in the cytoplasm. The catalysed reaction is tRNA(Gly) + glycine + ATP = glycyl-tRNA(Gly) + AMP + diphosphate. In Enterobacter sp. (strain 638), this protein is Glycine--tRNA ligase alpha subunit.